Reading from the N-terminus, the 940-residue chain is Protein translocase subunit SecA (940 aa).

ATP is bound by residues Q87, G105–T109, and D494. Residues A879–V940 form a disordered region. The span at K884–E898 shows a compositional bias: basic and acidic residues. A compositionally biased stretch (low complexity) spans S900–V915. Zn(2+)-binding residues include C921, C923, C932, and H933.

This sequence belongs to the SecA family. Monomer and homodimer. Part of the essential Sec protein translocation apparatus which comprises SecA, SecYEG and auxiliary proteins SecDF-YajC and YidC. It depends on Zn(2+) as a cofactor.

The protein localises to the cell inner membrane. It is found in the cytoplasm. The enzyme catalyses ATP + H2O + cellular proteinSide 1 = ADP + phosphate + cellular proteinSide 2.. Functionally, part of the Sec protein translocase complex. Interacts with the SecYEG preprotein conducting channel. Has a central role in coupling the hydrolysis of ATP to the transfer of proteins into and across the cell membrane, serving as an ATP-driven molecular motor driving the stepwise translocation of polypeptide chains across the membrane. In Myxococcus xanthus (strain DK1622), this protein is Protein translocase subunit SecA.